A 229-amino-acid chain; its full sequence is Ribonuclease 3 (229 aa).

Residues 4–133 enclose the RNase III domain; that stretch reads WEELQESVGF…FIGALYLDNG (130 aa). Position 46 (glutamate 46) interacts with Mg(2+). Residue aspartate 50 is part of the active site. Positions 119 and 122 each coordinate Mg(2+). Residue glutamate 122 is part of the active site. Positions 159–228 constitute a DRBM domain; sequence DYKTQLQEIV…AQFAINKLIH (70 aa).

Belongs to the ribonuclease III family. Homodimer. Mg(2+) serves as cofactor.

Its subcellular location is the cytoplasm. The enzyme catalyses Endonucleolytic cleavage to 5'-phosphomonoester.. In terms of biological role, digests double-stranded RNA. Involved in the processing of primary rRNA transcript to yield the immediate precursors to the large and small rRNAs (23S and 16S). Processes some mRNAs, and tRNAs when they are encoded in the rRNA operon. Processes pre-crRNA and tracrRNA of type II CRISPR loci if present in the organism. The chain is Ribonuclease 3 from Listeria monocytogenes serovar 1/2a (strain ATCC BAA-679 / EGD-e).